Reading from the N-terminus, the 249-residue chain is Triosephosphate isomerase (249 aa).

9–11 (NWK) lines the substrate pocket. Catalysis depends on histidine 95, which acts as the Electrophile. Glutamate 166 (proton acceptor) is an active-site residue. Residues glycine 172, serine 211, and 232 to 233 (GG) contribute to the substrate site.

The protein belongs to the triosephosphate isomerase family. Homodimer.

Its subcellular location is the cytoplasm. The catalysed reaction is D-glyceraldehyde 3-phosphate = dihydroxyacetone phosphate. It participates in carbohydrate biosynthesis; gluconeogenesis. It functions in the pathway carbohydrate degradation; glycolysis; D-glyceraldehyde 3-phosphate from glycerone phosphate: step 1/1. In terms of biological role, involved in the gluconeogenesis. Catalyzes stereospecifically the conversion of dihydroxyacetone phosphate (DHAP) to D-glyceraldehyde-3-phosphate (G3P). The protein is Triosephosphate isomerase of Legionella pneumophila (strain Lens).